Here is a 448-residue protein sequence, read N- to C-terminus: D-inositol 3-phosphate glycosyltransferase (448 aa).

Residues H35, 46–51 (DAGGLN), K104, Y137, T161, and R181 contribute to the 1D-myo-inositol 3-phosphate site. G49 contacts UDP-N-acetyl-alpha-D-glucosamine. UDP-N-acetyl-alpha-D-glucosamine contacts are provided by R255, K260, and M321. Y330, R331, and A333 together coordinate Mg(2+). Residues E343 and E351 each coordinate UDP-N-acetyl-alpha-D-glucosamine. T357 is a Mg(2+) binding site.

The protein belongs to the glycosyltransferase group 1 family. MshA subfamily. As to quaternary structure, homodimer.

The enzyme catalyses 1D-myo-inositol 3-phosphate + UDP-N-acetyl-alpha-D-glucosamine = 1D-myo-inositol 2-acetamido-2-deoxy-alpha-D-glucopyranoside 3-phosphate + UDP + H(+). Its function is as follows. Catalyzes the transfer of a N-acetyl-glucosamine moiety to 1D-myo-inositol 3-phosphate to produce 1D-myo-inositol 2-acetamido-2-deoxy-glucopyranoside 3-phosphate in the mycothiol biosynthesis pathway. This Acidothermus cellulolyticus (strain ATCC 43068 / DSM 8971 / 11B) protein is D-inositol 3-phosphate glycosyltransferase.